Reading from the N-terminus, the 338-residue chain is tRNA(Ile)-lysidine synthase (338 aa).

23–28 (SGGLDS) is a binding site for ATP.

It belongs to the tRNA(Ile)-lysidine synthase family.

It localises to the cytoplasm. It catalyses the reaction cytidine(34) in tRNA(Ile2) + L-lysine + ATP = lysidine(34) in tRNA(Ile2) + AMP + diphosphate + H(+). Its function is as follows. Ligates lysine onto the cytidine present at position 34 of the AUA codon-specific tRNA(Ile) that contains the anticodon CAU, in an ATP-dependent manner. Cytidine is converted to lysidine, thus changing the amino acid specificity of the tRNA from methionine to isoleucine. The chain is tRNA(Ile)-lysidine synthase from Helicobacter pylori (strain J99 / ATCC 700824) (Campylobacter pylori J99).